Reading from the N-terminus, the 471-residue chain is Trigger factor (471 aa).

The region spanning 165-244 (GDFVSIDLRA…VQSVKERVLP (80 aa)) is the PPIase FKBP-type domain. The segment at 407–471 (VTDASGNPVD…EATAEDPAKS (65 aa)) is disordered. The span at 416-443 (DLEELVGGTEEDDVTEDATEDVTEDAAP) shows a compositional bias: acidic residues.

This sequence belongs to the FKBP-type PPIase family. Tig subfamily.

Its subcellular location is the cytoplasm. It catalyses the reaction [protein]-peptidylproline (omega=180) = [protein]-peptidylproline (omega=0). Functionally, involved in protein export. Acts as a chaperone by maintaining the newly synthesized protein in an open conformation. Functions as a peptidyl-prolyl cis-trans isomerase. The polypeptide is Trigger factor (Kineococcus radiotolerans (strain ATCC BAA-149 / DSM 14245 / SRS30216)).